Here is a 591-residue protein sequence, read N- to C-terminus: uncharacterized protein (591 aa).

The next 4 membrane-spanning stretches (helical) occupy residues 389-409 (VYLGSYFAGASGLVIAGSALI), 411-431 (GGSPWFGLGLAGVGILAGGIL), 538-558 (GILPEWALWLITIVIGLFALS), and 571-591 (PIISIIVVIAILYALTYFNLL).

Its subcellular location is the membrane. This is an uncharacterized protein from Mycoplasma (Bacteriophage L2).